Consider the following 246-residue polypeptide: Ribonuclease PH (246 aa).

Residues Arg-91 and 129–131 (GTR) each bind phosphate.

The protein belongs to the RNase PH family. In terms of assembly, homohexameric ring arranged as a trimer of dimers.

It catalyses the reaction tRNA(n+1) + phosphate = tRNA(n) + a ribonucleoside 5'-diphosphate. Functionally, phosphorolytic 3'-5' exoribonuclease that plays an important role in tRNA 3'-end maturation. Removes nucleotide residues following the 3'-CCA terminus of tRNAs; can also add nucleotides to the ends of RNA molecules by using nucleoside diphosphates as substrates, but this may not be physiologically important. Probably plays a role in initiation of 16S rRNA degradation (leading to ribosome degradation) during starvation. The polypeptide is Ribonuclease PH (Burkholderia ambifaria (strain ATCC BAA-244 / DSM 16087 / CCUG 44356 / LMG 19182 / AMMD) (Burkholderia cepacia (strain AMMD))).